The following is a 138-amino-acid chain: ATP synthase epsilon chain (138 aa).

It belongs to the ATPase epsilon chain family. In terms of assembly, F-type ATPases have 2 components, CF(1) - the catalytic core - and CF(0) - the membrane proton channel. CF(1) has five subunits: alpha(3), beta(3), gamma(1), delta(1), epsilon(1). CF(0) has three main subunits: a, b and c.

It is found in the cell membrane. In terms of biological role, produces ATP from ADP in the presence of a proton gradient across the membrane. The polypeptide is ATP synthase epsilon chain (Streptococcus pyogenes serotype M3 (strain ATCC BAA-595 / MGAS315)).